The primary structure comprises 547 residues: Aspartate 1-decarboxylase (547 aa).

Lys338 bears the N6-(pyridoxal phosphate)lysine mark.

The protein belongs to the group II decarboxylase family. The cofactor is pyridoxal 5'-phosphate.

The enzyme catalyses L-aspartate + H(+) = beta-alanine + CO2. The protein operates within cofactor biosynthesis; (R)-pantothenate biosynthesis; beta-alanine from L-aspartate: step 1/1. Its function is as follows. Catalyzes the pyridoxal-dependent decarboxylation of aspartate to produce beta-alanine. Has weak activity with glutamate. In Aliivibrio fischeri (strain ATCC 700601 / ES114) (Vibrio fischeri), this protein is Aspartate 1-decarboxylase.